Reading from the N-terminus, the 122-residue chain is Large ribosomal subunit protein uL14 (122 aa).

This sequence belongs to the universal ribosomal protein uL14 family. In terms of assembly, part of the 50S ribosomal subunit. Forms a cluster with proteins L3 and L19. In the 70S ribosome, L14 and L19 interact and together make contacts with the 16S rRNA in bridges B5 and B8.

Binds to 23S rRNA. Forms part of two intersubunit bridges in the 70S ribosome. This Syntrophus aciditrophicus (strain SB) protein is Large ribosomal subunit protein uL14.